Here is a 147-residue protein sequence, read N- to C-terminus: Sec-independent protein translocase protein TatB (147 aa).

Residues 2–22 (FSSIGWPEIFTVLILGLIIIG) traverse the membrane as a helical segment. A disordered region spans residues 96-147 (FDPKKIMASGTEGEAYRERGINPQPAGDSASPQTPSNKESQPKAGFSWDDIT). Polar residues predominate over residues 125-134 (ASPQTPSNKE).

Belongs to the TatB family. The Tat system comprises two distinct complexes: a TatABC complex, containing multiple copies of TatA, TatB and TatC subunits, and a separate TatA complex, containing only TatA subunits. Substrates initially bind to the TatABC complex, which probably triggers association of the separate TatA complex to form the active translocon.

It is found in the cell membrane. Part of the twin-arginine translocation (Tat) system that transports large folded proteins containing a characteristic twin-arginine motif in their signal peptide across membranes. Together with TatC, TatB is part of a receptor directly interacting with Tat signal peptides. TatB may form an oligomeric binding site that transiently accommodates folded Tat precursor proteins before their translocation. The chain is Sec-independent protein translocase protein TatB from Corynebacterium diphtheriae (strain ATCC 700971 / NCTC 13129 / Biotype gravis).